We begin with the raw amino-acid sequence, 76 residues long: Putative membrane protein insertion efficiency factor (76 aa).

This sequence belongs to the UPF0161 family.

It localises to the cell inner membrane. Could be involved in insertion of integral membrane proteins into the membrane. This chain is Putative membrane protein insertion efficiency factor, found in Paraburkholderia phytofirmans (strain DSM 17436 / LMG 22146 / PsJN) (Burkholderia phytofirmans).